Reading from the N-terminus, the 812-residue chain is Leucine-rich repeat-containing protein 41 (812 aa).

The interaction with Elongin BC complex stretch occupies residues 45–54; it reads ALFELCGRAV. Phosphoserine is present on residues Ser-155, Ser-276, and Ser-326. Residues 267 to 408 are disordered; sequence GEASRGRAPS…GARTRQGPGA (142 aa). Thr-327 carries the phosphothreonine modification. The span at 354-381 shows a compositional bias: low complexity; that stretch reads TKRSPSAPAATSSASSSTSSYKRAPASS. Phosphoserine occurs at positions 357 and 373. A compositionally biased stretch (basic residues) spans 387-401; that stretch reads PLKRFKRAAGKKGAR. 7 LRR repeats span residues 487–507, 518–530, 531–555, 613–635, 636–659, 701–728, and 731–752; these read WVSL…IFRL, AGCR…LSDL, FSPL…VLSI, SGSL…FGLV, LQTL…LADC, NSTL…VFSE, and SSSL…LLEF.

Part of an E3 ubiquitin-protein ligase complex with Elongin BC (ELOB and ELOC), RBX1 and CUL5. Component of a probable ECS(LRRC41) complex which contains CUL5, RNF7/RBX2, Elongin BC and LRRC41. Interacts with CUL5, RNF7, ELOB and ELOC.

The protein operates within protein modification; protein ubiquitination. In terms of biological role, probable substrate recognition component of an ECS (Elongin BC-CUL2/5-SOCS-box protein) E3 ubiquitin ligase complex which mediates the ubiquitination and subsequent proteasomal degradation of target proteins. The chain is Leucine-rich repeat-containing protein 41 (LRRC41) from Homo sapiens (Human).